The sequence spans 675 residues: L-type lectin-domain containing receptor kinase IV.1 (675 aa).

Positions 1–22 are cleaved as a signal peptide; sequence MFLKLLTIFFFFFFNLIFQSSS. Topologically, residues 23 to 291 are extracellular; sequence QSLNFAYNNG…EPKRISEFYK (269 aa). Residues 25–261 form a legume-lectin like region; sequence LNFAYNNGFN…SEHYILGWSF (237 aa). Residues N57, N79, N112, N134, N153, and N186 are each glycosylated (N-linked (GlcNAc...) asparagine). A helical transmembrane segment spans residues 292–312; that stretch reads IGMPLISLFLIFSFIFLVCYI. The Cytoplasmic segment spans residues 313-675; that stretch reads VRRRRKFAEE…IADSQLSGGR (363 aa). The region spanning 347-624 is the Protein kinase domain; it reads FKEKGLLGTG…LHYLRGDAKL (278 aa). ATP contacts are provided by residues 353-361 and K376; that span reads LGTGGFGSV. Residue D472 is the Proton acceptor of the active site.

This sequence in the C-terminal section; belongs to the protein kinase superfamily. Ser/Thr protein kinase family. It in the N-terminal section; belongs to the leguminous lectin family.

Its subcellular location is the membrane. It carries out the reaction L-seryl-[protein] + ATP = O-phospho-L-seryl-[protein] + ADP + H(+). The enzyme catalyses L-threonyl-[protein] + ATP = O-phospho-L-threonyl-[protein] + ADP + H(+). The protein is L-type lectin-domain containing receptor kinase IV.1 (LECRK41) of Arabidopsis thaliana (Mouse-ear cress).